A 311-amino-acid polypeptide reads, in one-letter code: Phosphoribosylaminoimidazole-succinocarboxamide synthase (311 aa).

Belongs to the SAICAR synthetase family.

It catalyses the reaction 5-amino-1-(5-phospho-D-ribosyl)imidazole-4-carboxylate + L-aspartate + ATP = (2S)-2-[5-amino-1-(5-phospho-beta-D-ribosyl)imidazole-4-carboxamido]succinate + ADP + phosphate + 2 H(+). Its pathway is purine metabolism; IMP biosynthesis via de novo pathway; 5-amino-1-(5-phospho-D-ribosyl)imidazole-4-carboxamide from 5-amino-1-(5-phospho-D-ribosyl)imidazole-4-carboxylate: step 1/2. This chain is Phosphoribosylaminoimidazole-succinocarboxamide synthase, found in Aromatoleum aromaticum (strain DSM 19018 / LMG 30748 / EbN1) (Azoarcus sp. (strain EbN1)).